The primary structure comprises 559 residues: 5-epiaristolochene synthase (559 aa).

Residues Asp-312, Asp-316, Asp-455, Thr-459, and Glu-463 each contribute to the Mg(2+) site. The short motif at 312 to 316 (DDTYD) is the DDXXD motif element.

This sequence belongs to the terpene synthase family. As to quaternary structure, monomer. It depends on Mg(2+) as a cofactor. Expressed only in treated leaves an not detected in control leaves.

It localises to the cytoplasm. The catalysed reaction is (2E,6E)-farnesyl diphosphate = (+)-5-epi-aristolochene + diphosphate. Its pathway is secondary metabolite biosynthesis; terpenoid biosynthesis. Functionally, catalyzes the cyclization of trans,trans-farnesyl diphosphate (FPP) to the bicyclic intermediate 5-epi-aristolochene, initial step in the conversion of FPP to the sesquiterpenoid antifungal phytoalexin capsidiol. Produces germacrene A as an enzyme-bound intermediate that is not released by the enzyme, but is further cyclized to produce the bicyclic 5-epi-aristolochene. The protein is 5-epiaristolochene synthase (EAS) of Capsicum annuum (Capsicum pepper).